The primary structure comprises 311 residues: Acetyl-coenzyme A carboxylase carboxyl transferase subunit alpha (311 aa).

Residues 36 to 286 (KLEKEVEKTF…KEYFIKSLAE (251 aa)) enclose the CoA carboxyltransferase C-terminal domain.

The protein belongs to the AccA family. Acetyl-CoA carboxylase is a heterohexamer composed of biotin carboxyl carrier protein (AccB), biotin carboxylase (AccC) and two subunits each of ACCase subunit alpha (AccA) and ACCase subunit beta (AccD).

It is found in the cytoplasm. It catalyses the reaction N(6)-carboxybiotinyl-L-lysyl-[protein] + acetyl-CoA = N(6)-biotinyl-L-lysyl-[protein] + malonyl-CoA. It participates in lipid metabolism; malonyl-CoA biosynthesis; malonyl-CoA from acetyl-CoA: step 1/1. Its function is as follows. Component of the acetyl coenzyme A carboxylase (ACC) complex. First, biotin carboxylase catalyzes the carboxylation of biotin on its carrier protein (BCCP) and then the CO(2) group is transferred by the carboxyltransferase to acetyl-CoA to form malonyl-CoA. This chain is Acetyl-coenzyme A carboxylase carboxyl transferase subunit alpha, found in Aliarcobacter butzleri (strain RM4018) (Arcobacter butzleri).